The primary structure comprises 197 residues: Lipoprotein LprI (197 aa).

The signal sequence occupies residues 1-15 (MRWIGVLVTALVLSA). Residue cysteine 16 is the site of N-palmitoyl cysteine attachment. The S-diacylglycerol cysteine moiety is linked to residue cysteine 16.

It in the C-terminal section; belongs to the MliC family. In terms of assembly, probably a homodimer. Post-translationally, glycosylated.

It localises to the cell membrane. It is found in the secreted. The protein resides in the cell wall. The protein localises to the cell surface. Functionally, strongly binds and inhibits lysozyme, may help bacteria survive in lysozyme-producing host cells such as monocyte-derived macrophages. In Mycobacterium bovis (strain ATCC BAA-935 / AF2122/97), this protein is Lipoprotein LprI (lprI).